A 311-amino-acid polypeptide reads, in one-letter code: Methionyl-tRNA formyltransferase (311 aa).

Residue 110–113 (SLLP) participates in (6S)-5,6,7,8-tetrahydrofolate binding.

Belongs to the Fmt family.

The catalysed reaction is L-methionyl-tRNA(fMet) + (6R)-10-formyltetrahydrofolate = N-formyl-L-methionyl-tRNA(fMet) + (6S)-5,6,7,8-tetrahydrofolate + H(+). Functionally, attaches a formyl group to the free amino group of methionyl-tRNA(fMet). The formyl group appears to play a dual role in the initiator identity of N-formylmethionyl-tRNA by promoting its recognition by IF2 and preventing the misappropriation of this tRNA by the elongation apparatus. The polypeptide is Methionyl-tRNA formyltransferase (Streptococcus equi subsp. zooepidemicus (strain H70)).